Here is a 358-residue protein sequence, read N- to C-terminus: Peptide chain release factor 1 (358 aa).

Position 233 is an N5-methylglutamine (Gln-233).

The protein belongs to the prokaryotic/mitochondrial release factor family. Post-translationally, methylated by PrmC. Methylation increases the termination efficiency of RF1.

The protein resides in the cytoplasm. Functionally, peptide chain release factor 1 directs the termination of translation in response to the peptide chain termination codons UAG and UAA. The sequence is that of Peptide chain release factor 1 from Clostridium botulinum (strain Okra / Type B1).